Here is a 122-residue protein sequence, read N- to C-terminus: Large ribosomal subunit protein uL14 (122 aa).

Belongs to the universal ribosomal protein uL14 family. As to quaternary structure, part of the 50S ribosomal subunit. Forms a cluster with proteins L3 and L19. In the 70S ribosome, L14 and L19 interact and together make contacts with the 16S rRNA in bridges B5 and B8.

Binds to 23S rRNA. Forms part of two intersubunit bridges in the 70S ribosome. In Mycoplasmopsis pulmonis (strain UAB CTIP) (Mycoplasma pulmonis), this protein is Large ribosomal subunit protein uL14.